Reading from the N-terminus, the 203-residue chain is MQNAPESVLNALVPMVVEQTAKGERSYDIYSRLLKERVIFLVGQVEEHMANLIVAQLLFLESESPDKDIYLYINSPGGSVTAGMAIYDTMQFIKPNVSTVCIGQAASMGAFLLAGGAKGKRHCLPNSRVMIHQPLGGFQGQASDIAIHAQEILGIKNKLNQMLADHTGQPLEVIERDTDRDNFMSATEAAEYGLVDSVLDKRG.

Catalysis depends on S107, which acts as the Nucleophile. H132 is a catalytic residue.

Belongs to the peptidase S14 family. Fourteen ClpP subunits assemble into 2 heptameric rings which stack back to back to give a disk-like structure with a central cavity, resembling the structure of eukaryotic proteasomes.

Its subcellular location is the cytoplasm. The catalysed reaction is Hydrolysis of proteins to small peptides in the presence of ATP and magnesium. alpha-casein is the usual test substrate. In the absence of ATP, only oligopeptides shorter than five residues are hydrolyzed (such as succinyl-Leu-Tyr-|-NHMec, and Leu-Tyr-Leu-|-Tyr-Trp, in which cleavage of the -Tyr-|-Leu- and -Tyr-|-Trp bonds also occurs).. In terms of biological role, cleaves peptides in various proteins in a process that requires ATP hydrolysis. Has a chymotrypsin-like activity. Plays a major role in the degradation of misfolded proteins. The chain is ATP-dependent Clp protease proteolytic subunit from Shewanella loihica (strain ATCC BAA-1088 / PV-4).